We begin with the raw amino-acid sequence, 505 residues long: MVSIRPDEISSIIRQQIEQYDQEIQVSNVGTVLQVGDGIARVYGLDKVMSGELLEFEDGTIGIALNLEADNVGVVLMGDGRNILEGSSVRATQKIAQVPVGDAVIGRVVDALARPIDGKGDIATTDTRLIESSAPGIISRKFVYEPLQTGITAIDAMIPIPRGQRELIIGDRQTGKTAVAIDTILNQKGQGVVCVYVAIGQKASSVAQVVGVLQEKGALDYTVIVAANADDPATLQYLAPYTGASIAEYFMYKGQHTLVIYDDLSKQAQAYRQMSLLLRRPPGREAYPGDVFYLHSRLLERAAKLSPQLGEGSMTALPIVETQAGDVCAYIPTNVISITDGQIFLSADLFNSGLRPAINVGISVSRVGSAAQIKAMKQVAGKLKLELAQFDELKAFSQFSSDLDKATQLQLARGERLRELLKQQQYAPLPVEEQVAVIYTGINGFLDNIETKQVSAFISNLRENLSVKRAKFGEIIRSEKALTAEAENLLKDAISDCKQAFLSNI.

Glycine 170–threonine 177 contributes to the ATP binding site.

The protein belongs to the ATPase alpha/beta chains family. As to quaternary structure, F-type ATPases have 2 components, CF(1) - the catalytic core - and CF(0) - the membrane proton channel. CF(1) has five subunits: alpha(3), beta(3), gamma(1), delta(1), epsilon(1). CF(0) has four main subunits: a, b, b' and c.

The protein resides in the plastid. The protein localises to the cyanelle thylakoid membrane. It catalyses the reaction ATP + H2O + 4 H(+)(in) = ADP + phosphate + 5 H(+)(out). Its function is as follows. Produces ATP from ADP in the presence of a proton gradient across the membrane. The alpha chain is a regulatory subunit. This is ATP synthase subunit alpha, cyanelle from Cyanophora paradoxa.